The primary structure comprises 1372 residues: MSVVNFYGQLSNTQQFDQIRINIASPDQVRSWSFGEVTKPETINYRTFKPEKDGLFCARIFGPVKDYECLCGKYKRMKNRGITCEKCGVEVTVSRVRRERMGHIELAAPVAHIWFLKSLPSRISTLLDMTMRDVEKILYFENYVVIDPGLSILQKGELLTEEELQKAKDKYGEDAFTASIGAEVIQQMLKELDFAKLKHELYEELQTTSSEVKKKKIVKRLKLVEDFLESENKPEWMIMDVLPVIPPEIRPLVMLDGGRFATSDLNELYRRVINRNNRLKKLIESKAPDIIVRNEKRMLQEAVDALFDNGRRGRAAKNANKRPFKSLSDMLKGKQGRFRQNLLGKRVDYSGRSVIVVGPELKLHQCGLPKKMALELFKPFIYSKLELYGIATTIKAAKRMVEAEKPEVWDVLEEVIREHPVLLNRAPTLHRLGIQAFEPLLIEGKAIQLHPLVCAAFNADFDGDQMAVHIPLSIEAQLEARVFMMSTNNILSPANGRPIIVPDKDIVLGLYYLTLAFDNEVGEGMMFSDLAEMEHALYNKFITIHTKIKYRRNQLNAEGKMVHVIIDTTYGRLMVGELLPSNPNIEFKFINKQLTKKDISLVIDLVYRHCGQKATVIFADQLMKLGFKYACSSGISFGMDDMVVPESKSTHINETQLEIKEFEQQYSNGLITYGEKYNKVVDAWSRCTDRVANDMMKEIATPRVSDEPNHQKINAIYMMAISGARGSFQQIKQLGGMRGLMTKSNGQIIQTPIISNFKEGLTEFECFNSANGMRKGQIDTALKTASSGYLTRKLVDVAQDCIITEKDCGTDKGIEVKSVIEGGEVIVPSSEKILGRTAAIDIFHPVTNALILNKGELINEAKLEQIESAGLDRIMIKSVLTCESTTGICSICYGRDLATGTLVSEGEAIGVIAAQSIGEPGTQLTMRTFHIGGAATKGAEVSSVEASYGAKVKIISRNVVINSEERKIVMSRNCELLLLDNNGNEKARHKIPYGARLLVDDGDMVVKTQKLAEWDPYTIPIITEKSGKVLFKDMVEGISIRDVTDEATGIPSKVIIESKQYSRGAELRPRIQLLDAEGAVITLSNGLEARYYLPVGAVLSVEDGVQISVGDIIARIPKESTTTKDITGGLPRVAELVEARRPKDHAVIAEVDGRVEFGKDYKSKRRIIIHPIDETMSIEYMVPKGKHVVVNEGDFVKKGDLLIDGNPVLQDILKVMGVEVLANYIVKEVQAVYRLQGVKIDDKHIEVIIRQMLQKVEITDSGGTTLLAGEKIDRHEFEEINKKAIKNGLKPAAAQLILQGITKASLQTRSFISAASFQETTRVLTEAAIAGKVDKLRGLKENVIVGRLVPAGTGYFMDKMRKAAVKLDEENI.

Zn(2+) contacts are provided by cysteine 69, cysteine 71, cysteine 84, and cysteine 87. The Mg(2+) site is built by aspartate 460, aspartate 462, and aspartate 464. Residues cysteine 808, cysteine 882, cysteine 889, and cysteine 892 each coordinate Zn(2+).

Belongs to the RNA polymerase beta' chain family. As to quaternary structure, the RNAP catalytic core consists of 2 alpha, 1 beta, 1 beta' and 1 omega subunit. When a sigma factor is associated with the core the holoenzyme is formed, which can initiate transcription. It depends on Mg(2+) as a cofactor. Zn(2+) is required as a cofactor.

The catalysed reaction is RNA(n) + a ribonucleoside 5'-triphosphate = RNA(n+1) + diphosphate. Its function is as follows. DNA-dependent RNA polymerase catalyzes the transcription of DNA into RNA using the four ribonucleoside triphosphates as substrates. The chain is DNA-directed RNA polymerase subunit beta' from Rickettsia akari (strain Hartford).